A 483-amino-acid chain; its full sequence is Succinate semialdehyde dehydrogenase (483 aa).

Residues 156 to 157, 180 to 183, and 233 to 234 each bind NAD(+); these read WN, KPAP, and GS. The active-site Proton acceptor is Glu-255. NAD(+) is bound at residue Leu-256. Cys-289 functions as the Nucleophile in the catalytic mechanism. Glu-386 lines the NAD(+) pocket.

Belongs to the aldehyde dehydrogenase family. Homotetramer.

The enzyme catalyses succinate semialdehyde + NAD(+) + H2O = succinate + NADH + 2 H(+). In terms of biological role, involved in the degradation of the pyridine ring of trigonelline (TG; N-methylnicotinate) into succinate and methylamine as carbon and nitrogen sources, respectively. Catalyzes the NAD(+)-dependent oxidation of succinate semialdehyde to succinate. This chain is Succinate semialdehyde dehydrogenase, found in Acinetobacter baylyi (strain ATCC 33305 / BD413 / ADP1).